Consider the following 461-residue polypeptide: Ornithine decarboxylase (461 aa).

Residue Lys69 is modified to N6-(pyridoxal phosphate)lysine. Residues Ser200, Gly237, and 274–277 (EPGR) each bind pyridoxal 5'-phosphate. At Ser303 the chain carries Phosphoserine; by CK2. 331-332 (YD) provides a ligand contact to substrate. The Proton donor; shared with dimeric partner role is filled by Cys360. S-nitrosocysteine is present on Cys360. Residue Asp361 participates in substrate binding. Tyr389 contributes to the pyridoxal 5'-phosphate binding site.

This sequence belongs to the Orn/Lys/Arg decarboxylase class-II family. In terms of assembly, homodimer. Only the dimer is catalytically active, as the active sites are constructed of residues from both monomers. It depends on pyridoxal 5'-phosphate as a cofactor.

The enzyme catalyses L-ornithine + H(+) = putrescine + CO2. It participates in amine and polyamine biosynthesis; putrescine biosynthesis via L-ornithine pathway; putrescine from L-ornithine: step 1/1. Its activity is regulated as follows. Inhibited by antizymes (AZs) OAZ1, OAZ2 and OAZ3 in response to polyamine levels. AZs inhibit the assembly of the functional homodimer by binding to ODC monomers. Additionally, OAZ1 targets ODC monomers for ubiquitin-independent proteolytic destruction by the 26S proteasome. Its function is as follows. Catalyzes the first and rate-limiting step of polyamine biosynthesis that converts ornithine into putrescine, which is the precursor for the polyamines, spermidine and spermine. Polyamines are essential for cell proliferation and are implicated in cellular processes, ranging from DNA replication to apoptosis. This Rattus norvegicus (Rat) protein is Ornithine decarboxylase (Odc1).